A 278-amino-acid chain; its full sequence is Undecaprenyl-diphosphatase 1 (278 aa).

Transmembrane regions (helical) follow at residues 1-21 (MFFG…TEFL), 43-63 (AFTT…VVLL), 83-103 (IWAT…IGFL), 112-132 (LMNW…FIFI), 192-212 (FSFF…IGSY), 224-244 (IVIL…VIKW), and 257-277 (FGWY…IGII).

Belongs to the UppP family.

The protein localises to the cell membrane. It carries out the reaction di-trans,octa-cis-undecaprenyl diphosphate + H2O = di-trans,octa-cis-undecaprenyl phosphate + phosphate + H(+). In terms of biological role, catalyzes the dephosphorylation of undecaprenyl diphosphate (UPP). Confers resistance to bacitracin. The protein is Undecaprenyl-diphosphatase 1 of Oenococcus oeni (strain ATCC BAA-331 / PSU-1).